The chain runs to 2198 residues: RNA-directed RNA polymerase L (2198 aa).

Residues Lys26–Cys284 are endonuclease. Residues Glu51, Asp89, and Glu102 each contribute to the Mn(2+) site. Residue Lys115 is part of the active site. A RdRp catalytic domain is found at Cys1161–Val1359. Asp1319 serves as a coordination point for Mg(2+).

This sequence belongs to the Bunyavirales RNA polymerase family. In terms of assembly, homomultimer; the oligomeric structure is essential for the polymerase activity. Interacts with nucleoprotein N. Interacts with protein Z; this interaction inhibits viral transcription and replication, Z partially blocks the product exit tunnel for the releasing nascent RNA product. It depends on Mn(2+) as a cofactor. Mg(2+) serves as cofactor.

It is found in the virion. The protein localises to the host cytoplasm. The enzyme catalyses RNA(n) + a ribonucleoside 5'-triphosphate = RNA(n+1) + diphosphate. Its function is as follows. RNA-dependent RNA polymerase, which is responsible for the replication and transcription of the viral RNA genome using antigenomic RNA as an intermediate. During transcription, synthesizes subgenomic RNAs and assures their capping by a cap-snatching mechanism, which involves the endonuclease activity cleaving the host capped pre-mRNAs. These short capped RNAs are then used as primers for viral transcription. The 3'-end of subgenomic mRNAs molecules are heterogeneous and not polyadenylated. The replicase function is to direct synthesis of antigenomic and genomic RNA which are encapsidated and non capped. As a consequence of the use of the same enzyme for both transcription and replication, these mechanisms need to be well coordinated. These processes may be regulated by proteins N and Z in a dose-dependent manner. Z protein inhibits the viral polymerase L und thus the viral transcription and RNA synthesis. In Homo sapiens (Human), this protein is RNA-directed RNA polymerase L.